The sequence spans 250 residues: uncharacterized protein (250 aa).

A compositionally biased stretch (basic and acidic residues) spans 207-226; it reads LNDRDAINKSEEARKAREEV. Residues 207 to 250 form a disordered region; that stretch reads LNDRDAINKSEEARKAREEVFIPSEPSKPSIASKRSSASKSTKS. The span at 233 to 250 shows a compositional bias: low complexity; that stretch reads SKPSIASKRSSASKSTKS.

It is found in the plastid. The protein localises to the chloroplast. This is an uncharacterized protein from Chlorella vulgaris (Green alga).